The chain runs to 334 residues: Non-functional pseudokinase ZED1 (334 aa).

Residues 49-334 enclose the Protein kinase domain; it reads FSESRIISSW…KELKLIEKLS (286 aa). ATP-binding positions include 55–63 and lysine 76; that span reads ISSWGYFIW. Residues threonine 125 and threonine 177 each carry the O-acetylthreonine modification.

Belongs to the protein kinase superfamily. Ser/Thr protein kinase family. ZRK subfamily. Interacts with RPP13L4/ZAR1. Component of an immune signaling complex made of, at least, SZE1, BKN2/SZE2, ZAR1 and ZED1. Binds directly to SZE1 at the plasma membrane. Expressed in seedlings, young leaves, floral organs, shoot apical meristems (SAM) and inflorescence stems.

It is found in the cytoplasm. The protein resides in the cytosol. It localises to the nucleus. Its subcellular location is the cell membrane. In terms of biological role, together with RPP13L4/ZAR1, involved in the ambient temperature (above 22 degrees Celsius)-sensitive aerial organ development. Together with RPP13L4/ZAR1, involved in the regulation of the ambient temperature-sensitive intersection of growth and immune response in the absence of pathogens, by repressing the transcription of SNC1. Probable non-functional kinase required for recognition of the Pseudomonas syringae type III effector HopZ1a by RPP13L4/ZAR1 and, together with SZE1 and SZE2, to trigger subsequent defense responses. May function as a decoy to trap HopZ1a in the ZAR1 complex for recognition by the plant immune system. This Arabidopsis thaliana (Mouse-ear cress) protein is Non-functional pseudokinase ZED1.